Consider the following 367-residue polypeptide: DNA polymerase IV (367 aa).

The UmuC domain maps to 14 to 198; the sequence is IIHIDMDAFF…LPIAKFHGVG (185 aa). The Mg(2+) site is built by Asp18 and Asp116. Glu117 is an active-site residue.

This sequence belongs to the DNA polymerase type-Y family. As to quaternary structure, monomer. Requires Mg(2+) as cofactor.

The protein resides in the cytoplasm. It catalyses the reaction DNA(n) + a 2'-deoxyribonucleoside 5'-triphosphate = DNA(n+1) + diphosphate. Its function is as follows. Poorly processive, error-prone DNA polymerase involved in untargeted mutagenesis. Copies undamaged DNA at stalled replication forks, which arise in vivo from mismatched or misaligned primer ends. These misaligned primers can be extended by PolIV. Exhibits no 3'-5' exonuclease (proofreading) activity. May be involved in translesional synthesis, in conjunction with the beta clamp from PolIII. This Streptococcus thermophilus (strain ATCC BAA-491 / LMD-9) protein is DNA polymerase IV.